Here is a 264-residue protein sequence, read N- to C-terminus: tRNA pseudouridine synthase A (264 aa).

The active-site Nucleophile is aspartate 51. Tyrosine 109 contacts substrate.

It belongs to the tRNA pseudouridine synthase TruA family. Homodimer.

It catalyses the reaction uridine(38/39/40) in tRNA = pseudouridine(38/39/40) in tRNA. Functionally, formation of pseudouridine at positions 38, 39 and 40 in the anticodon stem and loop of transfer RNAs. This is tRNA pseudouridine synthase A from Pseudoalteromonas translucida (strain TAC 125).